We begin with the raw amino-acid sequence, 83 residues long: Antitoxin ChpS (83 aa).

In terms of domain architecture, SpoVT-AbrB spans 3 to 48; sequence ITIKRWGNSAGMVIPNIVMKELNLQPGQSVEAQVSNNQLILTPISR.

It belongs to the PemI family. Interacts with ChpB, inhibiting its endoribonuclease activity.

Functionally, antitoxin component of a type II toxin-antitoxin (TA) system. May be involved in the regulation of cell growth. It acts as a suppressor of the endoribonuclease (inhibitory function) of ChpB protein. Both ChpS and ChpB probably bind to the promoter region of the chpS-chpB operon to autoregulate their synthesis. The polypeptide is Antitoxin ChpS (chpS) (Escherichia coli (strain K12)).